The primary structure comprises 486 residues: Virulence sensor protein PhoQ (486 aa).

Residues 1-16 lie on the Cytoplasmic side of the membrane; that stretch reads MKKLLRLFFPLSLRVR. A helical transmembrane segment spans residues 17 to 37; it reads FLLATAAVVLVLSLAYGMVAL. The Periplasmic segment spans residues 38-194; the sequence is IGYSVSFDKT…LKSSYMVWSW (157 aa). Asp151 and Asp152 together coordinate a divalent metal cation. A helical membrane pass occupies residues 195-215; the sequence is FIYVLSANLLLVIPLLWVAAW. In terms of domain architecture, HAMP spans 215–266; it reads WWSLRPIEALAKEVRELEEHNRELLNPATTRELTSLVRNLNRLLKSERERYD. Residues 216-486 lie on the Cytoplasmic side of the membrane; that stretch reads WSLRPIEALA…GRQHSAPKDE (271 aa). The region spanning 274–480 is the Histidine kinase domain; that stretch reads DLTHSLKTPL…RMEVIFGRQH (207 aa). His277 carries the phosphohistidine; by autocatalysis modification. Residue Asn385 participates in Mg(2+) binding. Residues 385-393, 415-420, and 434-446 each bind ATP; these read NVLDNACKY, DDGPGI, and RVDT…GVGL. Gln442 contributes to the Mg(2+) binding site.

In terms of assembly, homodimer.

Its subcellular location is the cell inner membrane. It catalyses the reaction ATP + protein L-histidine = ADP + protein N-phospho-L-histidine.. Functionally, member of the two-component regulatory system PhoP/PhoQ involved in virulence and adaptation to low Mg(2+) environments. In low periplasmic Mg(2+), PhoQ functions as a membrane-associated protein kinase that undergoes autophosphorylation and subsequently transfers the phosphate to PhoP, which results in the expression of PhoP-activated genes (PAG) and repression of PhoP-repressed genes (PRG). In high periplasmic Mg(2+), acts as a protein phosphatase that dephosphorylates phospho-PhoP, which results in the repression of PAG and may lead to expression of some PRG. Necessary for resistance to killing by polymorphonuclear leukocytes (PMNs) and cationic antimicrobial peptides (CAMP) they produce. This is Virulence sensor protein PhoQ (phoQ) from Shigella flexneri.